Here is a 330-residue protein sequence, read N- to C-terminus: Putative glycosyltransferase ORF330 (330 aa).

It belongs to the glycosyltransferase group 1 family. Glycosyltransferase 4 subfamily.

The protein is Putative glycosyltransferase ORF330 of Acidianus filamentous virus 2 (isolate Italy/Pozzuoli) (AFV-2).